We begin with the raw amino-acid sequence, 332 residues long: Anthranilate phosphoribosyltransferase (332 aa).

5-phospho-alpha-D-ribose 1-diphosphate is bound by residues G79, 82 to 83 (GD), S87, 89 to 92 (NIST), 107 to 115 (KHGNRSVSS), and S119. G79 serves as a coordination point for anthranilate. A Mg(2+)-binding site is contributed by S91. N110 is an anthranilate binding site. Anthranilate is bound at residue R165. Mg(2+) is bound by residues D223 and E224.

This sequence belongs to the anthranilate phosphoribosyltransferase family. As to quaternary structure, homodimer. The cofactor is Mg(2+).

The enzyme catalyses N-(5-phospho-beta-D-ribosyl)anthranilate + diphosphate = 5-phospho-alpha-D-ribose 1-diphosphate + anthranilate. The protein operates within amino-acid biosynthesis; L-tryptophan biosynthesis; L-tryptophan from chorismate: step 2/5. Catalyzes the transfer of the phosphoribosyl group of 5-phosphorylribose-1-pyrophosphate (PRPP) to anthranilate to yield N-(5'-phosphoribosyl)-anthranilate (PRA). The protein is Anthranilate phosphoribosyltransferase of Photorhabdus laumondii subsp. laumondii (strain DSM 15139 / CIP 105565 / TT01) (Photorhabdus luminescens subsp. laumondii).